A 133-amino-acid polypeptide reads, in one-letter code: L-ectoine synthase (133 aa).

This sequence belongs to the ectoine synthase family.

It carries out the reaction (2S)-4-acetamido-2-aminobutanoate = L-ectoine + H2O. It functions in the pathway amine and polyamine biosynthesis; ectoine biosynthesis; L-ectoine from L-aspartate 4-semialdehyde: step 3/3. In terms of biological role, catalyzes the circularization of gamma-N-acetyl-alpha,gamma-diaminobutyric acid (ADABA) to ectoine (1,4,5,6-tetrahydro-2-methyl-4-pyrimidine carboxylic acid), which is an excellent osmoprotectant. This is L-ectoine synthase from Bordetella petrii (strain ATCC BAA-461 / DSM 12804 / CCUG 43448).